A 200-amino-acid chain; its full sequence is Glycosyl hydrolase family 19 domain-containing protein HI_1415 (200 aa).

This sequence belongs to the glycosyl hydrolase 19 family.

The chain is Glycosyl hydrolase family 19 domain-containing protein HI_1415 from Haemophilus influenzae (strain ATCC 51907 / DSM 11121 / KW20 / Rd).